The following is a 278-amino-acid chain: Protein D7 (278 aa).

2 CHHC U11-48K-type zinc fingers span residues 6–33 and 40–67; these read LMQCPYDKNHMIRPSRFPYHLVKCRENN and LATCPYNARHRVPKQELDLHMASCEYRV. Positions 9, 15, 25, 29, 43, 49, 59, and 63 each coordinate Zn(2+). Residues 149 to 164 are compositionally biased toward polar residues; the sequence is QVKQNQPEPEPFTSSE. Disordered stretches follow at residues 149–230 and 249–278; these read QVKQ…PKAN and PGGSSAASEPLGVDSFDEWPCLGRQPWVRK. Over residues 165–175 the composition is skewed to basic and acidic residues; the sequence is RNYDPRSKEPP. Polar residues predominate over residues 188-200; the sequence is ATTNTNPWCRQTG. The segment covering 214–225 has biased composition (basic and acidic residues); it reads SSDEGPRNKEFP.

The protein belongs to the UPF0224 (FAM112) family.

It is found in the cytoplasm. Functionally, involved in oocyte maturation. It is possible that D7 is required at a certain point in the maturation process and that maturation cannot proceed beyond this point unless a threshold amount of D7 protein is provided. This Xenopus laevis (African clawed frog) protein is Protein D7 (d7).